We begin with the raw amino-acid sequence, 1788 residues long: MNINNYSITLILLIKSNLVSSCMKIINSVVVVGLYYGFFTTFSIGPSYFFLLRARVLEVGDEKEISATTIGFIAGQLMMFISIYYAPLHLALRKPHTITALVLPYLLFHFFWNNHKNFFDSVYTTGNSMRNLNIQCIFLNSLIFQLFNHFILPSSTLARLINIYMFRYNNKMLFVASSFVGWLVGHIFFMKWVELVLFWIRQNHLIRSNKYLVSELKNSMSRIFSILLFIVCIYYLGRMPSPLVTKKLKKTSKREERGKNKEETDVEIEKISEEKGTNEQQEGSAEEDPSLCSEEKEGLDKIDETEEIQVNLNGREKTKDEFNKEKYSKNSPVCENYDLDGNQDNFELKKKEKEKKNIFWFEKPLVTLLFDYKRWNRPLRYIKNDFFENAVRNEMSQYFFYTCQSDGKQKISFTYLPSLSTFLEMIQQKMLLCITEKRSYEESYNNWVYTNDEKKKNLSNELFNRIAVLDKGFLVTDVLEKRTRLCNYENEQECLPKIYDPLLNGPYRGTIKELYSRSSMNEYLIPSIEDPRDTIWINKLYDIFPTDFKELKKKKIGKRINEIKKKVFQWSYKLIDDLEEEEEEEETTEDRGIRSRKAKRVVIFNDNETTKNNASNRDQVDEVALISYSQQSDFRRDIIKGSMRAQRRKTVTWKLFQTRVHSPLFLDRIDKIFVLSFDIDRILNFIFRNWMVEVTEFKIMDSEEQKAKKKDKKKKENERITIAETWDTVLFAQTIRGCILVIQSILRKLIVLPSLIIAKNIGHMLVFKPTEWHEDFEELNKEIHVKCTYNGVQLSENEFPKNWLTDGIQIKILFPFCLKSRHRSKLQPEDSLKKKGKKQNFYFLTVWGMEAELPFGSPRKGPSFFETIWKQLKKKHKKVKVKSFVAVKIIKERTKWFGKVSNEKTKWVTKKVQFIKKIMKELTKRNSISLFELKKVSESNSNRNKTEKFSIISNKMIPEFAIRIRSIDWTNYSLTEKKMKDMADRINTIRNQIEKITKDKKSIFLTTTTDRNIRPNKTSWDDKRLEQSKIFWQIVKRGRAKIIRKCNFFFHFCIEKICIDIFLSIINIPSRNIQILFQQKKKINDKYSYNDETKKNPIHFISTIKRSIYKTTNTSNKSQILCDLSFLSQAYVFYKLSQIQVSNKYNLKSLFQYHGTIPFIKDKIKIFFGTQGIFNSESRHKNFHDFGMNEWQSWLMGNDQYQYNLSQTCWSGLVPQKWRNRINKNLANSSNFYFYEKEPLIHYEKEKNYAVNSLPSRREKLKNYKYDLLSNKYINYENNSSSSFYGLPLEVNQAHAILYNYNTYNSEVFDLSGDIDFRNYLREDYDIDRDQNSDRKYLDWRTFNFCLRKKRNIAEWTNIDIGTSTTITKKIKSQIHYYQIIDKLEKNKTDNKGFLNLAIYKQIDSANQTKVFFDWMGMNEEILNWSILNRELWFFPEFLLLYDAYKIQPWIIPLNLLLLKLNINEKQKGDLHISYNKNKSLDLENRNQEETQQPVRGDLGSYVQKENNPGSDPLKKQTDGKEDFDRSNIQRNINKKKSKSNIAAELDFFLKKYFLFQLRWDNSFSEKIINNIKIYCLLLRLKNPKEIAISSIQRDEMSMDVMLVPKATTFIKLRKRRLLLIEPARLSINWDGLFIMYQTLVILQVHNSKYQTCKKKINVDNKGLIESMARHEILFRNRDKNNYDFLIPENLLSSRRRRELRIQICLNLRNFKVGDRNREFSNENSTRSCDLFFYEDKNLDVDIKKILKFKFFLWPNYRLEDLACMNRYWFDTNNGSRFSMSRIHMYPY.

A run of 6 helical transmembrane segments spans residues 25–45 (IINS…FSIG), 70–90 (IGFI…PLHL), 95–115 (PHTI…WNNH), 132–152 (LNIQ…HFIL), 180–200 (VGWL…LFWI), and 223–243 (IFSI…PSPL). Disordered stretches follow at residues 248–297 (LKKT…EEKE) and 1482–1526 (DLEN…DFDR). Basic and acidic residues-rich tracts occupy residues 253–277 (KREE…EKGT) and 1513–1526 (PLKK…DFDR).

Belongs to the TIC214 family. In terms of assembly, part of the Tic complex.

It is found in the plastid. Its subcellular location is the chloroplast inner membrane. Its function is as follows. Involved in protein precursor import into chloroplasts. May be part of an intermediate translocation complex acting as a protein-conducting channel at the inner envelope. The protein is Protein TIC 214 of Ranunculus macranthus (Large buttercup).